A 591-amino-acid chain; its full sequence is L-fucose isomerase (591 aa).

Residues E337 and D361 each act as proton acceptor in the active site. The Mn(2+) site is built by E337, D361, and H528.

Belongs to the L-fucose isomerase family. As to quaternary structure, homohexamer. Mn(2+) serves as cofactor.

The protein localises to the cytoplasm. It carries out the reaction L-fucose = L-fuculose. The protein operates within carbohydrate degradation; L-fucose degradation; L-lactaldehyde and glycerone phosphate from L-fucose: step 1/3. Converts the aldose L-fucose into the corresponding ketose L-fuculose. The protein is L-fucose isomerase of Salmonella heidelberg (strain SL476).